We begin with the raw amino-acid sequence, 167 residues long: Peptide deformylase (167 aa).

Residues cysteine 91 and histidine 133 each contribute to the Fe cation site. The active site involves glutamate 134. Residue histidine 137 coordinates Fe cation.

It belongs to the polypeptide deformylase family. Fe(2+) serves as cofactor.

The enzyme catalyses N-terminal N-formyl-L-methionyl-[peptide] + H2O = N-terminal L-methionyl-[peptide] + formate. Removes the formyl group from the N-terminal Met of newly synthesized proteins. Requires at least a dipeptide for an efficient rate of reaction. N-terminal L-methionine is a prerequisite for activity but the enzyme has broad specificity at other positions. The chain is Peptide deformylase from Tolumonas auensis (strain DSM 9187 / NBRC 110442 / TA 4).